The following is a 397-amino-acid chain: CCA-adding enzyme (397 aa).

Positions 26 and 29 each coordinate ATP. CTP-binding residues include glycine 26 and arginine 29. 2 residues coordinate Mg(2+): aspartate 39 and aspartate 41. The ATP site is built by arginine 110, aspartate 153, arginine 156, arginine 159, and arginine 162. Arginine 110, aspartate 153, arginine 156, arginine 159, and arginine 162 together coordinate CTP.

This sequence belongs to the tRNA nucleotidyltransferase/poly(A) polymerase family. Bacterial CCA-adding enzyme type 3 subfamily. As to quaternary structure, homodimer. The cofactor is Mg(2+).

It carries out the reaction a tRNA precursor + 2 CTP + ATP = a tRNA with a 3' CCA end + 3 diphosphate. The enzyme catalyses a tRNA with a 3' CCA end + 2 CTP + ATP = a tRNA with a 3' CCACCA end + 3 diphosphate. Its function is as follows. Catalyzes the addition and repair of the essential 3'-terminal CCA sequence in tRNAs without using a nucleic acid template. Adds these three nucleotides in the order of C, C, and A to the tRNA nucleotide-73, using CTP and ATP as substrates and producing inorganic pyrophosphate. tRNA 3'-terminal CCA addition is required both for tRNA processing and repair. Also involved in tRNA surveillance by mediating tandem CCA addition to generate a CCACCA at the 3' terminus of unstable tRNAs. While stable tRNAs receive only 3'-terminal CCA, unstable tRNAs are marked with CCACCA and rapidly degraded. The protein is CCA-adding enzyme of Bacillus mycoides (strain KBAB4) (Bacillus weihenstephanensis).